The chain runs to 318 residues: Methionyl-tRNA formyltransferase (318 aa).

Residue 114 to 117 (SVLP) coordinates (6S)-5,6,7,8-tetrahydrofolate.

It belongs to the Fmt family.

The enzyme catalyses L-methionyl-tRNA(fMet) + (6R)-10-formyltetrahydrofolate = N-formyl-L-methionyl-tRNA(fMet) + (6S)-5,6,7,8-tetrahydrofolate + H(+). In terms of biological role, attaches a formyl group to the free amino group of methionyl-tRNA(fMet). The formyl group appears to play a dual role in the initiator identity of N-formylmethionyl-tRNA by promoting its recognition by IF2 and preventing the misappropriation of this tRNA by the elongation apparatus. The sequence is that of Methionyl-tRNA formyltransferase from Bdellovibrio bacteriovorus (strain ATCC 15356 / DSM 50701 / NCIMB 9529 / HD100).